The sequence spans 236 residues: DCN1-like protein 5 (236 aa).

Phosphoserine occurs at positions 9, 40, and 47. One can recognise a DCUN1 domain in the interval 45 to 231 (FSSKKCLAWF…LLDEFVEWHK (187 aa)).

Part of a complex that contains DCUN1D5, CUL1 and RBX1; this interaction is bridged by CUL1. Interacts (via the DCUN1 domain) with the unneddylated cullins: interacts with CUL1, CUL2, CUL3, CUL4A, CUL4B and CUL5; these interactions promote the cullin neddylation and the identity of the cullin dictates the affinity of the interaction. Interacts (via DCUN1 domain) with UBE2M (N-terminally acetylated form) and probably with UBE2F (N-terminally acetylated form). May also interact with regulators or subunits of cullin-RING ligases such as RBX1, RNF7, ELOB and DDB1; these interactions are bridged by cullins. Interacts with CAND1; this interaction is bridged by cullins and strongly inhibits the neddylation of cullins. These CAND-cullin-DCNL complexes can only be neddylated in the presence of a substrate adapter. Phosphorylation at Ser-40 is independent of cullin's interaction. Phosphorylated in response to both TICAM1 and MYD88 dependent Toll-like receptor (TLR) pathway activation. Phosphorylated in response to IL1B stimulation.

It localises to the nucleus. The protein resides in the cytoplasm. The protein localises to the cytoskeleton. It is found in the spindle. Contributes to the neddylation of all cullins by transferring NEDD8 from N-terminally acetylated NEDD8-conjugating E2s enzyme to different cullin C-terminal domain-RBX complexes which is necessary for the activation of cullin-RING E3 ubiquitin ligases (CRLs). May play a role in DNA damage response and may participate in cell proliferation and anchorage-independent cell growth. The polypeptide is DCN1-like protein 5 (DCUN1D5) (Bos taurus (Bovine)).